The primary structure comprises 122 residues: Large ribosomal subunit protein uL14c (122 aa).

Belongs to the universal ribosomal protein uL14 family. As to quaternary structure, part of the 50S ribosomal subunit.

It localises to the plastid. Its subcellular location is the chloroplast. Binds to 23S rRNA. This chain is Large ribosomal subunit protein uL14c, found in Populus alba (White poplar).